We begin with the raw amino-acid sequence, 946 residues long: Bifunctional glutamine synthetase adenylyltransferase/adenylyl-removing enzyme (946 aa).

The tract at residues Met-1–Glu-440 is adenylyl removase. Residues Ser-449 to Glu-946 are adenylyl transferase.

It belongs to the GlnE family. It depends on Mg(2+) as a cofactor.

It carries out the reaction [glutamine synthetase]-O(4)-(5'-adenylyl)-L-tyrosine + phosphate = [glutamine synthetase]-L-tyrosine + ADP. The catalysed reaction is [glutamine synthetase]-L-tyrosine + ATP = [glutamine synthetase]-O(4)-(5'-adenylyl)-L-tyrosine + diphosphate. In terms of biological role, involved in the regulation of glutamine synthetase GlnA, a key enzyme in the process to assimilate ammonia. When cellular nitrogen levels are high, the C-terminal adenylyl transferase (AT) inactivates GlnA by covalent transfer of an adenylyl group from ATP to specific tyrosine residue of GlnA, thus reducing its activity. Conversely, when nitrogen levels are low, the N-terminal adenylyl removase (AR) activates GlnA by removing the adenylyl group by phosphorolysis, increasing its activity. The regulatory region of GlnE binds the signal transduction protein PII (GlnB) which indicates the nitrogen status of the cell. In Escherichia coli O7:K1 (strain IAI39 / ExPEC), this protein is Bifunctional glutamine synthetase adenylyltransferase/adenylyl-removing enzyme.